The chain runs to 385 residues: GTPase Obg (385 aa).

One can recognise an Obg domain in the interval 1–159 (MKFVDEATIL…REIQLELMLL (159 aa)). In terms of domain architecture, OBG-type G spans 160–333 (ADVGMLGLPN…LCWDVMAFIN (174 aa)). Residues 166-173 (GLPNAGKS), 191-195 (FTTLV), 213-216 (DIPG), 283-286 (NKAD), and 314-316 (SAA) each bind GTP. Mg(2+) contacts are provided by S173 and T193. The span at 362 to 379 (QQEEAEETLDDDWDEDGV) shows a compositional bias: acidic residues. Residues 362–385 (QQEEAEETLDDDWDEDGVETIYQR) form a disordered region.

Belongs to the TRAFAC class OBG-HflX-like GTPase superfamily. OBG GTPase family. Monomer. Requires Mg(2+) as cofactor.

Its subcellular location is the cytoplasm. Functionally, an essential GTPase which binds GTP, GDP and possibly (p)ppGpp with moderate affinity, with high nucleotide exchange rates and a fairly low GTP hydrolysis rate. Plays a role in control of the cell cycle, stress response, ribosome biogenesis and in those bacteria that undergo differentiation, in morphogenesis control. This chain is GTPase Obg, found in Sodalis glossinidius (strain morsitans).